The primary structure comprises 610 residues: Lipoprotein LpqB (610 aa).

Positions 1-27 are cleaved as a signal peptide; the sequence is MGAEGGGRRRALRLGAYVGCGAVLLTG. A lipid anchor (N-palmitoyl cysteine) is attached at Cys-28. Cys-28 is lipidated: S-diacylglycerol cysteine.

Belongs to the LpqB lipoprotein family.

It localises to the cell membrane. The sequence is that of Lipoprotein LpqB from Streptomyces avermitilis (strain ATCC 31267 / DSM 46492 / JCM 5070 / NBRC 14893 / NCIMB 12804 / NRRL 8165 / MA-4680).